A 282-amino-acid polypeptide reads, in one-letter code: Succinate dehydrogenase [ubiquinone] iron-sulfur subunit, mitochondrial (282 aa).

A mitochondrion-targeting transit peptide spans M1–Y21. The 2Fe-2S ferredoxin-type domain occupies E39 to M129. [2Fe-2S] cluster-binding residues include C89, C94, C97, and C109. Positions E172 to Y202 constitute a 4Fe-4S ferredoxin-type domain. Residues C182, C185, and C188 each contribute to the [4Fe-4S] cluster site. C192 lines the [3Fe-4S] cluster pocket. Residue W197 participates in a rhodoquinol binding. W197 lines the a ubiquinone pocket. [3Fe-4S] cluster is bound by residues C239 and C245. A [4Fe-4S] cluster-binding site is contributed by C249.

Belongs to the succinate dehydrogenase/fumarate reductase iron-sulfur protein family. In terms of assembly, component of the mitochondrial electron transport chain complex II composed of four subunits: a flavoprotein (Fp), an iron-sulfur protein (Ip), and a large cytochrome b (CybL) subunit and a small cytochrome b (CybS) subunit. There are 2 developmental stage-specific forms of complex II which have the Ip and CybL subunits in common. Complex II from the free-living larvae (aerobic environment) acts as a succinate dehydrogenase and is composed of the common subunit Ip and CybL and the stage specific subunits FpL and CybSL. Complex II from parasitic larvae and adults (anaerobic environment) acts as a fumarate reductase and is composed of the common subunit Ip and CybL and the stage specific subunits FpA and CybSA. [2Fe-2S] cluster serves as cofactor. Requires [3Fe-4S] cluster as cofactor. [4Fe-4S] cluster is required as a cofactor. In terms of tissue distribution, expressed in adult muscles (at protein level).

It localises to the mitochondrion inner membrane. It carries out the reaction a ubiquinone + succinate = a ubiquinol + fumarate. The catalysed reaction is a rhodoquinone + succinate = a rhodoquinol + fumarate. Its pathway is carbohydrate metabolism; tricarboxylic acid cycle; fumarate from succinate (eukaryal route): step 1/1. Its activity is regulated as follows. Inhibited by the fungicide flutolanil. Iron-sulfur protein (Ip) subunit of the mitochondrial electron transport chain complex II which, together with the flavoprotein (Fp) subunit forms the catalytic core of the complex. During the free-living egg-larvae stages, which occur in an aerobic environment, complex II acts as a succinate dehydrogenase by transferring electrons from succinate to ubiquinone. During the parasitic larvae and adult stages, which occur in an anaerobic environment, complex II acts as a fumarate reductase by transferring electrons from rhodoquinol to fumarate. This is Succinate dehydrogenase [ubiquinone] iron-sulfur subunit, mitochondrial from Ascaris suum (Pig roundworm).